The chain runs to 236 residues: MGQKVHPNGVRLGITKTWHSTWYANNKDFSDNLGNDFKVRHFLMQKLSKALVSRIIIERPAKSIRVTVYTARPGLIIGKKGEDIEKLRKNIARISGVPTQLNIAEVRKPELDAKLLADNIASQLERRVVFRRAMKRVVQNAMRLGAKGIKVEVSGRLSGAEIARTEWYREGRVPLHTLRADIDYSLSEARTTYGIIGIKVWVFKGEILGDVLLLNTGYSSDQTINNSSKKKHKTRI.

The KH type-2 domain maps to valine 39–arginine 107.

This sequence belongs to the universal ribosomal protein uS3 family. As to quaternary structure, part of the 30S ribosomal subunit. Forms a tight complex with proteins S10 and S14.

In terms of biological role, binds the lower part of the 30S subunit head. Binds mRNA in the 70S ribosome, positioning it for translation. In Blochmanniella pennsylvanica (strain BPEN), this protein is Small ribosomal subunit protein uS3.